Consider the following 249-residue polypeptide: Ubiquinone biosynthesis O-methyltransferase (249 aa).

Residues 1–21 are disordered; the sequence is MIPEVSNEASQPAAHRQENVD. 4 residues coordinate S-adenosyl-L-methionine: arginine 52, glycine 72, aspartate 93, and methionine 137.

Belongs to the methyltransferase superfamily. UbiG/COQ3 family.

It carries out the reaction a 3-demethylubiquinol + S-adenosyl-L-methionine = a ubiquinol + S-adenosyl-L-homocysteine + H(+). It catalyses the reaction a 3-(all-trans-polyprenyl)benzene-1,2-diol + S-adenosyl-L-methionine = a 2-methoxy-6-(all-trans-polyprenyl)phenol + S-adenosyl-L-homocysteine + H(+). It functions in the pathway cofactor biosynthesis; ubiquinone biosynthesis. Its function is as follows. O-methyltransferase that catalyzes the 2 O-methylation steps in the ubiquinone biosynthetic pathway. This is Ubiquinone biosynthesis O-methyltransferase from Sodalis glossinidius (strain morsitans).